Here is a 192-residue protein sequence, read N- to C-terminus: Ribose 1,5-bisphosphate phosphokinase PhnN (192 aa).

Residue 15-22 (GPSGAGKD) coordinates ATP.

This sequence belongs to the ribose 1,5-bisphosphokinase family.

The catalysed reaction is alpha-D-ribose 1,5-bisphosphate + ATP = 5-phospho-alpha-D-ribose 1-diphosphate + ADP. Its pathway is metabolic intermediate biosynthesis; 5-phospho-alpha-D-ribose 1-diphosphate biosynthesis; 5-phospho-alpha-D-ribose 1-diphosphate from D-ribose 5-phosphate (route II): step 3/3. Functionally, catalyzes the phosphorylation of ribose 1,5-bisphosphate to 5-phospho-D-ribosyl alpha-1-diphosphate (PRPP). This is Ribose 1,5-bisphosphate phosphokinase PhnN from Brucella abortus biovar 1 (strain 9-941).